A 690-amino-acid polypeptide reads, in one-letter code: Protein arginine N-methyltransferase 7 (690 aa).

2 SAM-dependent MTase PRMT-type domains span residues 14-357 (ENSW…YSLW) and 366-690 (AKSV…QKKP).

Belongs to the class I-like SAM-binding methyltransferase superfamily. Protein arginine N-methyltransferase family. PRMT7 subfamily.

Essential arginine methyltransferase that can both catalyze the formation of omega-N monomethylarginine (MMA) and symmetrical dimethylarginine (sDMA). Specifically mediates the symmetrical dimethylation of arginine residues in the small nuclear ribonucleoproteins SmD1 and SmD3. The polypeptide is Protein arginine N-methyltransferase 7 (Art7) (Drosophila ananassae (Fruit fly)).